The sequence spans 279 residues: Shikimate dehydrogenase (NADP(+)) (279 aa).

Shikimate contacts are provided by residues 21-23 (SRS) and Thr-68. The Proton acceptor role is filled by Lys-72. Asp-83 serves as a coordination point for NADP(+). Shikimate is bound by residues Asn-92 and Asp-107. NADP(+)-binding positions include 132-136 (GAGGA), 156-161 (NRTVER), and Leu-221. Tyr-223 lines the shikimate pocket. Residue Gly-244 coordinates NADP(+).

It belongs to the shikimate dehydrogenase family. As to quaternary structure, homodimer.

The catalysed reaction is shikimate + NADP(+) = 3-dehydroshikimate + NADPH + H(+). The protein operates within metabolic intermediate biosynthesis; chorismate biosynthesis; chorismate from D-erythrose 4-phosphate and phosphoenolpyruvate: step 4/7. Its function is as follows. Involved in the biosynthesis of the chorismate, which leads to the biosynthesis of aromatic amino acids. Catalyzes the reversible NADPH linked reduction of 3-dehydroshikimate (DHSA) to yield shikimate (SA). The polypeptide is Shikimate dehydrogenase (NADP(+)) (Nitrobacter winogradskyi (strain ATCC 25391 / DSM 10237 / CIP 104748 / NCIMB 11846 / Nb-255)).